Here is a 190-residue protein sequence, read N- to C-terminus: Guanylate kinase (190 aa).

Positions 8 to 188 (GRLVILAGPS…AVKAIEDVLL (181 aa)) constitute a Guanylate kinase-like domain. 15 to 22 (GPSAVGKS) is a binding site for ATP.

It belongs to the guanylate kinase family.

It is found in the cytoplasm. The enzyme catalyses GMP + ATP = GDP + ADP. Functionally, essential for recycling GMP and indirectly, cGMP. This Corynebacterium glutamicum (strain ATCC 13032 / DSM 20300 / JCM 1318 / BCRC 11384 / CCUG 27702 / LMG 3730 / NBRC 12168 / NCIMB 10025 / NRRL B-2784 / 534) protein is Guanylate kinase.